Here is a 408-residue protein sequence, read N- to C-terminus: Argininosuccinate synthase (408 aa).

ATP is bound by residues 10–18 and Ala-37; that span reads AYSGGLDTS. 2 residues coordinate L-citrulline: Tyr-90 and Ser-95. Gly-120 contributes to the ATP binding site. Positions 122, 126, and 127 each coordinate L-aspartate. Asn-126 is an L-citrulline binding site. 5 residues coordinate L-citrulline: Arg-130, Ser-181, Ser-190, Glu-266, and Tyr-278.

Belongs to the argininosuccinate synthase family. Type 1 subfamily. In terms of assembly, homotetramer.

Its subcellular location is the cytoplasm. The catalysed reaction is L-citrulline + L-aspartate + ATP = 2-(N(omega)-L-arginino)succinate + AMP + diphosphate + H(+). It participates in amino-acid biosynthesis; L-arginine biosynthesis; L-arginine from L-ornithine and carbamoyl phosphate: step 2/3. The sequence is that of Argininosuccinate synthase from Cereibacter sphaeroides (strain ATCC 17025 / ATH 2.4.3) (Rhodobacter sphaeroides).